The primary structure comprises 58 residues: UPF0434 protein Swoo_1821 (58 aa).

Belongs to the UPF0434 family.

The sequence is that of UPF0434 protein Swoo_1821 from Shewanella woodyi (strain ATCC 51908 / MS32).